A 914-amino-acid polypeptide reads, in one-letter code: Protein translocase subunit SecA (914 aa).

Residues glutamine 87, glycine 105–threonine 109, and aspartate 508 each bind ATP. The Zn(2+) site is built by cysteine 898, cysteine 900, cysteine 909, and histidine 910.

The protein belongs to the SecA family. As to quaternary structure, monomer and homodimer. Part of the essential Sec protein translocation apparatus which comprises SecA, SecYEG and auxiliary proteins SecDF-YajC and YidC. It depends on Zn(2+) as a cofactor.

The protein localises to the cell inner membrane. It localises to the cytoplasm. It catalyses the reaction ATP + H2O + cellular proteinSide 1 = ADP + phosphate + cellular proteinSide 2.. In terms of biological role, part of the Sec protein translocase complex. Interacts with the SecYEG preprotein conducting channel. Has a central role in coupling the hydrolysis of ATP to the transfer of proteins into and across the cell membrane, serving both as a receptor for the preprotein-SecB complex and as an ATP-driven molecular motor driving the stepwise translocation of polypeptide chains across the membrane. The polypeptide is Protein translocase subunit SecA (Xylella fastidiosa (strain M23)).